We begin with the raw amino-acid sequence, 196 residues long: Shikimate kinase (196 aa).

Position 21–26 (21–26 (GTGKSR)) interacts with ATP. Ser25 serves as a coordination point for Mg(2+). Asp43, Arg67, and Gly89 together coordinate substrate. Arg126 contacts ATP. Arg145 contributes to the substrate binding site. Residue Arg161 coordinates ATP.

The protein belongs to the shikimate kinase family. In terms of assembly, monomer. Requires Mg(2+) as cofactor.

Its subcellular location is the cytoplasm. The catalysed reaction is shikimate + ATP = 3-phosphoshikimate + ADP + H(+). The protein operates within metabolic intermediate biosynthesis; chorismate biosynthesis; chorismate from D-erythrose 4-phosphate and phosphoenolpyruvate: step 5/7. In terms of biological role, catalyzes the specific phosphorylation of the 3-hydroxyl group of shikimic acid using ATP as a cosubstrate. The sequence is that of Shikimate kinase from Deinococcus radiodurans (strain ATCC 13939 / DSM 20539 / JCM 16871 / CCUG 27074 / LMG 4051 / NBRC 15346 / NCIMB 9279 / VKM B-1422 / R1).